Here is a 289-residue protein sequence, read N- to C-terminus: Polyamine aminopropyltransferase (289 aa).

Positions 5–245 constitute a PABS domain; it reads PGPIVLVEPL…YAVNYILGSL (241 aa). S-methyl-5'-thioadenosine is bound at residue Gln36. The spermidine site is built by His67 and Glu91. S-methyl-5'-thioadenosine-binding positions include Asp111 and 143-144; that span reads DG. The active-site Proton acceptor is Asp164.

The protein belongs to the spermidine/spermine synthase family. In terms of assembly, homodimer or homotetramer.

Its subcellular location is the cytoplasm. The enzyme catalyses S-adenosyl 3-(methylsulfanyl)propylamine + putrescine = S-methyl-5'-thioadenosine + spermidine + H(+). Its pathway is amine and polyamine biosynthesis; spermidine biosynthesis; spermidine from putrescine: step 1/1. In terms of biological role, catalyzes the irreversible transfer of a propylamine group from the amino donor S-adenosylmethioninamine (decarboxy-AdoMet) to putrescine (1,4-diaminobutane) to yield spermidine. This is Polyamine aminopropyltransferase from Pyrobaculum arsenaticum (strain DSM 13514 / JCM 11321 / PZ6).